Consider the following 1334-residue polypeptide: CRISPR-associated endonuclease Cas9 (1334 aa).

The For RuvC-like nuclease domain role is filled by D10. Mn(2+)-binding residues include D10, E765, and E769. The region spanning 773 to 924 is the HNH Cas9-type domain; it reads TGKGKNNSRP…DKARFIHRQL (152 aa). H843 functions as the Proton acceptor for HNH nuclease domain in the catalytic mechanism. Position 986 (H986) interacts with Mn(2+).

It belongs to the CRISPR-associated protein Cas9 family. Subtype II-A subfamily. Monomer. Binds crRNA and tracrRNA. Requires Mg(2+) as cofactor.

In terms of biological role, CRISPR (clustered regularly interspaced short palindromic repeat) is an adaptive immune system that provides protection against mobile genetic elements (viruses, transposable elements and conjugative plasmids). CRISPR clusters contain spacers, sequences complementary to antecedent mobile elements, and target invading nucleic acids. CRISPR clusters are transcribed and processed into CRISPR RNA (crRNA). In type II CRISPR systems correct processing of pre-crRNA requires a trans-encoded small RNA (tracrRNA), endogenous ribonuclease 3 (rnc) and this protein. The tracrRNA serves as a guide for ribonuclease 3-aided processing of pre-crRNA. Subsequently Cas9/crRNA/tracrRNA endonucleolytically cleaves linear or circular dsDNA target complementary to the spacer; Cas9 is inactive in the absence of the 2 guide RNAs (gRNA). Cas9 recognizes the protospacer adjacent motif (PAM) in the CRISPR repeat sequences to help distinguish self versus nonself, as targets within the bacterial CRISPR locus do not have PAMs. PAM recognition is also required for catalytic activity. This is CRISPR-associated endonuclease Cas9 from Listeria innocua serovar 6a (strain ATCC BAA-680 / CLIP 11262).